The primary structure comprises 121 residues: uncharacterized protein (121 aa).

The segment at 101 to 121 is disordered; it reads TVVKKEDVRESPVDTFMENAT. Residues 102–112 show a composition bias toward basic and acidic residues; that stretch reads VVKKEDVRESP.

This is an uncharacterized protein from Schizosaccharomyces pombe (strain 972 / ATCC 24843) (Fission yeast).